The primary structure comprises 941 residues: Coiled-coil domain-containing protein 39 (941 aa).

Coiled coils occupy residues 16–122 (AIPV…ENGI), 164–273 (AQQD…ESEI), 306–605 (QLKG…EIKV), and 665–825 (IKAA…EEQD). The segment at 868–941 (PTASTKGSRQ…SNVKSKKSSK (74 aa)) is disordered. Low complexity-rich tracts occupy residues 871–903 (STKGSRQSSRSPSHTSLSARSSRSTSTSTSQSS) and 914–934 (SSSLVGSPSRPSSASSSSSNV). A phosphoserine mark is found at serine 892 and serine 900.

This sequence belongs to the CCDC39 family. In terms of tissue distribution, mainly expressed in nasal brushings and, to a lesser extent, in lungs and testis.

It is found in the cytoplasm. Its subcellular location is the cytoskeleton. The protein resides in the cilium axoneme. In terms of biological role, required for assembly of dynein regulatory complex (DRC) and inner dynein arm (IDA) complexes, which are responsible for ciliary beat regulation, thereby playing a central role in motility in cilia and flagella. Probably acts together with CCDC40 to form a molecular ruler that determines the 96 nanometer (nm) repeat length and arrangements of components in cilia and flagella. Not required for outer dynein arm complexes assembly. This chain is Coiled-coil domain-containing protein 39, found in Homo sapiens (Human).